A 317-amino-acid chain; its full sequence is Probable deoxyhypusine synthase 1 (317 aa).

Catalysis depends on Lys-285, which acts as the Nucleophile.

This sequence belongs to the deoxyhypusine synthase family. The cofactor is NAD(+).

It carries out the reaction [eIF5A protein]-L-lysine + spermidine = [eIF5A protein]-deoxyhypusine + propane-1,3-diamine. It participates in protein modification; eIF5A hypusination. Its function is as follows. Catalyzes the NAD-dependent oxidative cleavage of spermidine and the subsequent transfer of the butylamine moiety of spermidine to the epsilon-amino group of a specific lysine residue of the eIF-5A precursor protein to form the intermediate deoxyhypusine residue. The sequence is that of Probable deoxyhypusine synthase 1 (dys1) from Methanosarcina acetivorans (strain ATCC 35395 / DSM 2834 / JCM 12185 / C2A).